The primary structure comprises 1247 residues: Respiratory nitrate reductase 1 alpha chain (1247 aa).

Residues aspartate 43–asparagine 107 form the 4Fe-4S Mo/W bis-MGD-type domain. [4Fe-4S] cluster-binding residues include histidine 50, cysteine 54, cysteine 58, and cysteine 93. Aspartate 223 serves as a coordination point for Mo-bis(molybdopterin guanine dinucleotide).

It belongs to the prokaryotic molybdopterin-containing oxidoreductase family. As to quaternary structure, dimer of heterotrimers each composed of an alpha, a beta and a gamma chain. Alpha and beta are catalytic chains; gamma chains are involved in binding the enzyme complex to the cytoplasmic membrane. Interacts with the NarJ chaperone. [4Fe-4S] cluster is required as a cofactor. Mo-bis(molybdopterin guanine dinucleotide) serves as cofactor.

Its subcellular location is the cell membrane. It catalyses the reaction nitrate + a quinol = a quinone + nitrite + H2O. The nitrate reductase enzyme complex allows E.coli to use nitrate as an electron acceptor during anaerobic growth. The alpha chain is the actual site of nitrate reduction. The protein is Respiratory nitrate reductase 1 alpha chain (narG) of Escherichia coli (strain K12).